A 304-amino-acid chain; its full sequence is uncharacterized protein (304 aa).

A run of 10 helical transmembrane segments spans residues 5–25 (TIIL…FIAI), 42–62 (FLLA…PLLF), 68–88 (IFQL…ILYG), 96–116 (IASV…FIFF), 120–140 (LYFF…IILF), 150–170 (TIKG…IYLY), 178–198 (ISIL…FLVI), 215–235 (ILAT…SYFY), 245–265 (ASTI…FVWG), and 268–288 (IGID…ITIF). EamA domains lie at 16–140 (ITWG…IILF) and 162–288 (TSHA…ITIF).

It belongs to the EamA transporter family.

Its subcellular location is the cell membrane. This is an uncharacterized protein from Buchnera aphidicola subsp. Schlechtendalia chinensis.